The chain runs to 821 residues: Glycogen phosphorylase (821 aa).

Position 667 is an N6-(pyridoxal phosphate)lysine (Lys667).

This sequence belongs to the glycogen phosphorylase family. Requires pyridoxal 5'-phosphate as cofactor.

The enzyme catalyses [(1-&gt;4)-alpha-D-glucosyl](n) + phosphate = [(1-&gt;4)-alpha-D-glucosyl](n-1) + alpha-D-glucose 1-phosphate. In terms of biological role, phosphorylase is an important allosteric enzyme in carbohydrate metabolism. Enzymes from different sources differ in their regulatory mechanisms and in their natural substrates. However, all known phosphorylases share catalytic and structural properties. This chain is Glycogen phosphorylase (glgP), found in Haemophilus influenzae (strain ATCC 51907 / DSM 11121 / KW20 / Rd).